The primary structure comprises 376 residues: Crh-like protein 4 (376 aa).

The first 21 residues, 1-21 (MFPKIFLTAATALLSAKSTFA), serve as a signal peptide directing secretion. A GH16 domain is found at 22-229 (QTYSSCNPLF…WARGPTDYSN (208 aa)). A disulfide bridge links Cys-27 with Cys-35. Glu-119 serves as the catalytic Nucleophile. The Proton donor role is filled by Glu-123. Residues Glu-123, Lys-202, Trp-206, and Thr-217 each coordinate chitin. Residue Ser-346 is the site of GPI-anchor amidated serine attachment. A propeptide spans 347-376 (ASPINISRINPLLLCGPFTFFFFAAIRRWP) (removed in mature form). N-linked (GlcNAc...) asparagine glycosylation occurs at Asn-351.

It belongs to the glycosyl hydrolase 16 family. CRH1 subfamily.

Its subcellular location is the cell membrane. The catalysed reaction is Random endo-hydrolysis of N-acetyl-beta-D-glucosaminide (1-&gt;4)-beta-linkages in chitin and chitodextrins.. In terms of biological role, dual chitinase/transglycosylase that plays a role in cell wall architecture. Chitinase and transglycosylase activities are coupled. Required for the polysaccharide cross-linking at the septa and the cell wall. More specifically, transfers chitin to 1,6-beta-glucan in the cell wall. This Botryotinia fuckeliana (strain B05.10) (Noble rot fungus) protein is Crh-like protein 4.